The sequence spans 410 residues: Mating-type locus allele B6 protein (410 aa).

A variable domain between B alleles region spans residues 1–110 (MSRDPKLSLS…VNVASPAVEY (110 aa)). Positions 107 to 184 (AVEYRNLSED…NARRRSGWSH (78 aa)) form a DNA-binding region, homeobox; TALE-type. The tract at residues 111 to 410 (RNLSEDLPAY…PFFCLSIAFV (300 aa)) is highly conserved between B alleles. Disordered stretches follow at residues 202–224 (RAKLSSSNQSTPPSLTSEKPSDD), 278–335 (TPKP…TPEL), and 373–393 (KARGNRKVKALPKRAGKQQPD). The segment covering 205–219 (LSSSNQSTPPSLTSE) has biased composition (polar residues). The short motif at 276 to 308 (KKTPKPGMPRPVTTVAKRQPARKTKPAAKPKSR) is the Nuclear localization signal element. The segment covering 294–307 (QPARKTKPAAKPKS) has biased composition (basic residues). The span at 312–335 (PRASTTPSIDSTLDSSKLESTPEL) shows a compositional bias: polar residues. The interval 333–410 (PELSMCSTAD…PFFCLSIAFV (78 aa)) is not essential for B6 function. A compositionally biased stretch (basic residues) spans 375 to 388 (RGNRKVKALPKRAG).

The protein belongs to the TALE/M-ATYP homeobox family.

The protein resides in the nucleus. Functionally, the B locus has at least 25 alleles, and any combination of two different B alleles yields a multimeric regulatory protein, that activates genes responsible for the pathogenicity and for the sexual development of the fungus within the corn plant. The protein is Mating-type locus allele B6 protein of Mycosarcoma maydis (Corn smut fungus).